The primary structure comprises 487 residues: GTPase Der (487 aa).

EngA-type G domains lie at 3–166 (PVIA…IAEL) and 201–374 (VKLA…ESAT). GTP is bound by residues 9-16 (GRPNVGKS), 56-60 (DTGGI), 118-121 (NKTD), 207-214 (GRPNVGKS), 254-258 (DTAGV), and 319-322 (NKWD). One can recognise a KH-like domain in the interval 375-459 (KRISTAMLRR…PIKIEFREGD (85 aa)).

It belongs to the TRAFAC class TrmE-Era-EngA-EngB-Septin-like GTPase superfamily. EngA (Der) GTPase family. In terms of assembly, associates with the 50S ribosomal subunit.

Its function is as follows. GTPase that plays an essential role in the late steps of ribosome biogenesis. This is GTPase Der from Pseudoalteromonas translucida (strain TAC 125).